The sequence spans 316 residues: Acetyl-coenzyme A carboxylase carboxyl transferase subunit beta (316 aa).

Residues 39–308 (LWHKCSKCGV…TPPMVLWETM (270 aa)) enclose the CoA carboxyltransferase N-terminal domain. 4 residues coordinate Zn(2+): Cys-43, Cys-46, Cys-62, and Cys-65. Residues 43–65 (CSKCGVLTYTKDLRANQMVCVEC) form a C4-type zinc finger.

The protein belongs to the AccD/PCCB family. As to quaternary structure, acetyl-CoA carboxylase is a heterohexamer composed of biotin carboxyl carrier protein (AccB), biotin carboxylase (AccC) and two subunits each of ACCase subunit alpha (AccA) and ACCase subunit beta (AccD). It depends on Zn(2+) as a cofactor.

It localises to the cytoplasm. It catalyses the reaction N(6)-carboxybiotinyl-L-lysyl-[protein] + acetyl-CoA = N(6)-biotinyl-L-lysyl-[protein] + malonyl-CoA. It functions in the pathway lipid metabolism; malonyl-CoA biosynthesis; malonyl-CoA from acetyl-CoA: step 1/1. In terms of biological role, component of the acetyl coenzyme A carboxylase (ACC) complex. Biotin carboxylase (BC) catalyzes the carboxylation of biotin on its carrier protein (BCCP) and then the CO(2) group is transferred by the transcarboxylase to acetyl-CoA to form malonyl-CoA. The sequence is that of Acetyl-coenzyme A carboxylase carboxyl transferase subunit beta from Nostoc sp. (strain PCC 7120 / SAG 25.82 / UTEX 2576).